Here is an 81-residue protein sequence, read N- to C-terminus: Large ribosomal subunit protein bL31B (81 aa).

This sequence belongs to the bacterial ribosomal protein bL31 family. Type B subfamily. Part of the 50S ribosomal subunit.

The sequence is that of Large ribosomal subunit protein bL31B from Lactococcus lactis subsp. cremoris (strain MG1363).